A 331-amino-acid chain; its full sequence is Pantothenate kinase (331 aa).

An ATP-binding site is contributed by G109–S116.

Belongs to the prokaryotic pantothenate kinase family.

It is found in the cytoplasm. The catalysed reaction is (R)-pantothenate + ATP = (R)-4'-phosphopantothenate + ADP + H(+). Its pathway is cofactor biosynthesis; coenzyme A biosynthesis; CoA from (R)-pantothenate: step 1/5. The sequence is that of Pantothenate kinase from Sinorhizobium medicae (strain WSM419) (Ensifer medicae).